Reading from the N-terminus, the 266-residue chain is UPF0294 protein YafD (266 aa).

Belongs to the UPF0294 family.

It localises to the cytoplasm. The sequence is that of UPF0294 protein YafD from Salmonella dublin (strain CT_02021853).